The chain runs to 323 residues: Aldo-keto reductase family 1 member C1 (323 aa).

Residues 20–24 (GFGTY) and aspartate 50 each bind NADP(+). Tyrosine 24 is a binding site for substrate. Tyrosine 55 serves as the catalytic Proton donor. Histidine 117 serves as a coordination point for substrate. NADP(+) is bound by residues 166–167 (SN), glutamine 190, and 216–222 (YSALGSH). Positions 222 and 227 each coordinate substrate. Residue 270-280 (KSYNEQRIREN) participates in NADP(+) binding.

This sequence belongs to the aldo/keto reductase family. In terms of assembly, monomer. As to expression, expressed in liver, adrenal gland, intestine and kidney.

The protein localises to the cytoplasm. Its subcellular location is the cytosol. The catalysed reaction is a 3alpha-hydroxysteroid + NADP(+) = a 3-oxosteroid + NADPH + H(+). It carries out the reaction a 3alpha-hydroxysteroid + NAD(+) = a 3-oxosteroid + NADH + H(+). The enzyme catalyses (17R,20S)-17,20-dihydroxypregn-4-en-3-one + NADP(+) = 17alpha-hydroxyprogesterone + NADPH + H(+). It catalyses the reaction (17R,20S)-17,20-dihydroxypregn-4-en-3-one + NAD(+) = 17alpha-hydroxyprogesterone + NADH + H(+). The catalysed reaction is (20S)-hydroxypregn-4-en-3-one + NADP(+) = progesterone + NADPH + H(+). It carries out the reaction (20S)-hydroxypregn-4-en-3-one + NAD(+) = progesterone + NADH + H(+). The enzyme catalyses (1R,2R)-1,2-dihydrobenzene-1,2-diol + NADP(+) = catechol + NADPH + H(+). It catalyses the reaction (S)-indan-1-ol + NAD(+) = indan-1-one + NADH + H(+). The catalysed reaction is (S)-indan-1-ol + NADP(+) = indan-1-one + NADPH + H(+). It carries out the reaction 5alpha-androstane-3alpha,17beta-diol + NADP(+) = 17beta-hydroxy-5alpha-androstan-3-one + NADPH + H(+). The enzyme catalyses 5alpha-androstane-3beta,17beta-diol + NADP(+) = 17beta-hydroxy-5alpha-androstan-3-one + NADPH + H(+). It catalyses the reaction 5alpha-androstane-3alpha,17beta-diol + NAD(+) = 17beta-hydroxy-5alpha-androstan-3-one + NADH + H(+). The catalysed reaction is 17beta-hydroxy-5alpha-androstan-3-one + NADP(+) = 5alpha-androstan-3,17-dione + NADPH + H(+). It carries out the reaction androsterone + NADP(+) = 5alpha-androstan-3,17-dione + NADPH + H(+). The enzyme catalyses androsterone + NADPH + H(+) = 5alpha-androstane-3alpha,17beta-diol + NADP(+). It catalyses the reaction 5alpha-androstane-3alpha,17beta-diol + NAD(+) = androsterone + NADH + H(+). The catalysed reaction is 17beta-estradiol + NADP(+) = estrone + NADPH + H(+). It carries out the reaction 17beta-estradiol + NAD(+) = estrone + NADH + H(+). The enzyme catalyses testosterone + NADP(+) = androst-4-ene-3,17-dione + NADPH + H(+). It catalyses the reaction 20alpha-hydroxy-5beta-pregnan-3-one + NADP(+) = 5beta-pregnan-3,20-dione + NADPH + H(+). The catalysed reaction is 3beta-hydroxy-5beta-pregnane-20-one + NADP(+) = 5beta-pregnan-3,20-dione + NADPH + H(+). It carries out the reaction 3beta-hydroxy-5beta-pregnane-20-one + NADPH + H(+) = 3beta,20alpha-dihydroxy-5beta-pregnane + NADP(+). The enzyme catalyses (3beta,5alpha,17beta)-3-hydroxyandrostan-17-yl sulfate + NADP(+) = 5alpha-dihydrotestosterone sulfate + NADPH + H(+). It participates in steroid metabolism. Its function is as follows. Cytosolic aldo-keto reductase that catalyzes the NADH and NADPH-dependent reduction of ketosteroids to hydroxysteroids. Most probably acts as a reductase in vivo since the oxidase activity measured in vitro is inhibited by physiological concentrations of NADPH. Displays a broad positional specificity acting on positions 3, 17 and 20 of steroids and regulates the metabolism of hormones like estrogens and androgens. May also reduce conjugated steroids such as 5alpha-dihydrotestosterone sulfate. Displays affinity for bile acids. The protein is Aldo-keto reductase family 1 member C1 (AKR1C1) of Macaca fuscata fuscata (Japanese macaque).